Here is a 277-residue protein sequence, read N- to C-terminus: 4-hydroxy-3-methylbut-2-enyl diphosphate reductase (277 aa).

A [4Fe-4S] cluster-binding site is contributed by Cys12. His36 and His70 together coordinate (2E)-4-hydroxy-3-methylbut-2-enyl diphosphate. 2 residues coordinate dimethylallyl diphosphate: His36 and His70. Residues His36 and His70 each contribute to the isopentenyl diphosphate site. Cys92 contacts [4Fe-4S] cluster. Residue His120 participates in (2E)-4-hydroxy-3-methylbut-2-enyl diphosphate binding. His120 is a binding site for dimethylallyl diphosphate. His120 provides a ligand contact to isopentenyl diphosphate. The active-site Proton donor is the Glu122. Thr158 is a (2E)-4-hydroxy-3-methylbut-2-enyl diphosphate binding site. Cys186 is a binding site for [4Fe-4S] cluster. (2E)-4-hydroxy-3-methylbut-2-enyl diphosphate-binding residues include Ser214, Asn216, and Ser258. The dimethylallyl diphosphate site is built by Ser214, Asn216, and Ser258. Ser214, Asn216, and Ser258 together coordinate isopentenyl diphosphate.

It belongs to the IspH family. [4Fe-4S] cluster is required as a cofactor.

The catalysed reaction is isopentenyl diphosphate + 2 oxidized [2Fe-2S]-[ferredoxin] + H2O = (2E)-4-hydroxy-3-methylbut-2-enyl diphosphate + 2 reduced [2Fe-2S]-[ferredoxin] + 2 H(+). It carries out the reaction dimethylallyl diphosphate + 2 oxidized [2Fe-2S]-[ferredoxin] + H2O = (2E)-4-hydroxy-3-methylbut-2-enyl diphosphate + 2 reduced [2Fe-2S]-[ferredoxin] + 2 H(+). It participates in isoprenoid biosynthesis; dimethylallyl diphosphate biosynthesis; dimethylallyl diphosphate from (2E)-4-hydroxy-3-methylbutenyl diphosphate: step 1/1. The protein operates within isoprenoid biosynthesis; isopentenyl diphosphate biosynthesis via DXP pathway; isopentenyl diphosphate from 1-deoxy-D-xylulose 5-phosphate: step 6/6. Functionally, catalyzes the conversion of 1-hydroxy-2-methyl-2-(E)-butenyl 4-diphosphate (HMBPP) into a mixture of isopentenyl diphosphate (IPP) and dimethylallyl diphosphate (DMAPP). Acts in the terminal step of the DOXP/MEP pathway for isoprenoid precursor biosynthesis. The protein is 4-hydroxy-3-methylbut-2-enyl diphosphate reductase of Campylobacter jejuni subsp. jejuni serotype O:2 (strain ATCC 700819 / NCTC 11168).